We begin with the raw amino-acid sequence, 86 residues long: RNA-binding protein Hfq (86 aa).

Positions 9–68 (DPFLNALRRERIPVSIYLVNGIKLQGQIESFDQFVILLKNTVNQMVYKHAISTVVPARPV) constitute a Sm domain. The disordered stretch occupies residues 65 to 86 (ARPVSHHSGERGSDRPSEKSED). Basic and acidic residues predominate over residues 71-86 (HSGERGSDRPSEKSED).

Belongs to the Hfq family. Homohexamer.

Functionally, RNA chaperone that binds small regulatory RNA (sRNAs) and mRNAs to facilitate mRNA translational regulation in response to envelope stress, environmental stress and changes in metabolite concentrations. Also binds with high specificity to tRNAs. This is RNA-binding protein Hfq from Vibrio vulnificus (strain YJ016).